The sequence spans 148 residues: MKVIFTQDVKGKGKKGEVKDVPVGYANNFLLKNKYAVEATPGNLKQLEQQNKRAEADRQQEIDDAKALKEQLKDIEVEVSAKTGEGGKLFGSISTKQIAEALKKQHDIKIDKRKMDLPHGIHALGYTNVPVKLDKEVEGTIRVHTVEQ.

This sequence belongs to the bacterial ribosomal protein bL9 family.

Its function is as follows. Binds to the 23S rRNA. This chain is Large ribosomal subunit protein bL9, found in Staphylococcus epidermidis (strain ATCC 35984 / DSM 28319 / BCRC 17069 / CCUG 31568 / BM 3577 / RP62A).